Consider the following 702-residue polypeptide: Elongation factor G (702 aa).

Positions 8 to 290 (SRYRNIGISA…AVIEYLPSPT (283 aa)) constitute a tr-type G domain. GTP-binding positions include 17–24 (AHIDAGKT), 88–92 (DTPGH), and 142–145 (NKMD).

This sequence belongs to the TRAFAC class translation factor GTPase superfamily. Classic translation factor GTPase family. EF-G/EF-2 subfamily.

It is found in the cytoplasm. Its function is as follows. Catalyzes the GTP-dependent ribosomal translocation step during translation elongation. During this step, the ribosome changes from the pre-translocational (PRE) to the post-translocational (POST) state as the newly formed A-site-bound peptidyl-tRNA and P-site-bound deacylated tRNA move to the P and E sites, respectively. Catalyzes the coordinated movement of the two tRNA molecules, the mRNA and conformational changes in the ribosome. The polypeptide is Elongation factor G (Edwardsiella ictaluri (strain 93-146)).